We begin with the raw amino-acid sequence, 159 residues long: Cyclic pyranopterin monophosphate synthase (159 aa).

Substrate contacts are provided by residues 76–78 (LCH) and 114–115 (ME). D129 is an active-site residue.

The protein belongs to the MoaC family. In terms of assembly, homohexamer; trimer of dimers.

The enzyme catalyses (8S)-3',8-cyclo-7,8-dihydroguanosine 5'-triphosphate = cyclic pyranopterin phosphate + diphosphate. Its pathway is cofactor biosynthesis; molybdopterin biosynthesis. Its function is as follows. Catalyzes the conversion of (8S)-3',8-cyclo-7,8-dihydroguanosine 5'-triphosphate to cyclic pyranopterin monophosphate (cPMP). In Psychromonas ingrahamii (strain DSM 17664 / CCUG 51855 / 37), this protein is Cyclic pyranopterin monophosphate synthase.